The chain runs to 502 residues: Glycerol kinase (502 aa).

Position 13 (threonine 13) interacts with ADP. 3 residues coordinate ATP: threonine 13, threonine 14, and serine 15. Sn-glycerol 3-phosphate is bound at residue threonine 13. ADP is bound at residue arginine 17. Positions 83, 84, 135, and 245 each coordinate sn-glycerol 3-phosphate. Residues arginine 83, glutamate 84, tyrosine 135, aspartate 245, and glutamine 246 each coordinate glycerol. ADP-binding residues include threonine 267 and glycine 310. Positions 267, 310, 314, and 411 each coordinate ATP. ADP is bound by residues glycine 411 and asparagine 415.

It belongs to the FGGY kinase family. In terms of assembly, homotetramer and homodimer (in equilibrium).

The catalysed reaction is glycerol + ATP = sn-glycerol 3-phosphate + ADP + H(+). The protein operates within polyol metabolism; glycerol degradation via glycerol kinase pathway; sn-glycerol 3-phosphate from glycerol: step 1/1. Activated by phosphorylation and inhibited by fructose 1,6-bisphosphate (FBP). Its function is as follows. Key enzyme in the regulation of glycerol uptake and metabolism. Catalyzes the phosphorylation of glycerol to yield sn-glycerol 3-phosphate. In Lactobacillus delbrueckii subsp. bulgaricus (strain ATCC BAA-365 / Lb-18), this protein is Glycerol kinase.